We begin with the raw amino-acid sequence, 957 residues long: Glycine dehydrogenase (decarboxylating) (957 aa).

At Lys708 the chain carries N6-(pyridoxal phosphate)lysine.

Belongs to the GcvP family. The glycine cleavage system is composed of four proteins: P, T, L and H. Requires pyridoxal 5'-phosphate as cofactor.

The enzyme catalyses N(6)-[(R)-lipoyl]-L-lysyl-[glycine-cleavage complex H protein] + glycine + H(+) = N(6)-[(R)-S(8)-aminomethyldihydrolipoyl]-L-lysyl-[glycine-cleavage complex H protein] + CO2. In terms of biological role, the glycine cleavage system catalyzes the degradation of glycine. The P protein binds the alpha-amino group of glycine through its pyridoxal phosphate cofactor; CO(2) is released and the remaining methylamine moiety is then transferred to the lipoamide cofactor of the H protein. The sequence is that of Glycine dehydrogenase (decarboxylating) from Escherichia coli O7:K1 (strain IAI39 / ExPEC).